Here is a 317-residue protein sequence, read N- to C-terminus: Aspartate carbamoyltransferase catalytic subunit (317 aa).

Residues Arg65 and Thr66 each coordinate carbamoyl phosphate. Residue Lys93 participates in L-aspartate binding. Carbamoyl phosphate-binding residues include Arg115, His145, and Gln148. Arg178 and Arg233 together coordinate L-aspartate. Residues Gly274 and Pro275 each coordinate carbamoyl phosphate.

Belongs to the aspartate/ornithine carbamoyltransferase superfamily. ATCase family. In terms of assembly, heterododecamer (2C3:3R2) of six catalytic PyrB chains organized as two trimers (C3), and six regulatory PyrI chains organized as three dimers (R2).

The catalysed reaction is carbamoyl phosphate + L-aspartate = N-carbamoyl-L-aspartate + phosphate + H(+). The protein operates within pyrimidine metabolism; UMP biosynthesis via de novo pathway; (S)-dihydroorotate from bicarbonate: step 2/3. Functionally, catalyzes the condensation of carbamoyl phosphate and aspartate to form carbamoyl aspartate and inorganic phosphate, the committed step in the de novo pyrimidine nucleotide biosynthesis pathway. This Bordetella parapertussis (strain 12822 / ATCC BAA-587 / NCTC 13253) protein is Aspartate carbamoyltransferase catalytic subunit.